A 118-amino-acid chain; its full sequence is DNA-binding protein SSO0352 (118 aa).

The protein belongs to the PDCD5 family.

The polypeptide is DNA-binding protein SSO0352 (Saccharolobus solfataricus (strain ATCC 35092 / DSM 1617 / JCM 11322 / P2) (Sulfolobus solfataricus)).